A 499-amino-acid polypeptide reads, in one-letter code: GTPase Der (499 aa).

EngA-type G domains follow at residues 3 to 166 (PVVA…LETL) and 213 to 386 (IKFA…QSAT). Residues 9–16 (GRPNVGKS), 56–60 (DTGGI), 118–121 (NKTD), 219–226 (GRPNVGKS), 266–270 (DTAGV), and 331–334 (NKWD) contribute to the GTP site. The region spanning 387–471 (RRTSTAMLTR…PVRVEFQESA (85 aa)) is the KH-like domain.

This sequence belongs to the TRAFAC class TrmE-Era-EngA-EngB-Septin-like GTPase superfamily. EngA (Der) GTPase family. Associates with the 50S ribosomal subunit.

Functionally, GTPase that plays an essential role in the late steps of ribosome biogenesis. The chain is GTPase Der from Aeromonas hydrophila subsp. hydrophila (strain ATCC 7966 / DSM 30187 / BCRC 13018 / CCUG 14551 / JCM 1027 / KCTC 2358 / NCIMB 9240 / NCTC 8049).